We begin with the raw amino-acid sequence, 199 residues long: UPF0462 protein C4orf33 (199 aa).

This sequence belongs to the UPF0462 family.

The protein is UPF0462 protein C4orf33 (C4orf33) of Homo sapiens (Human).